A 248-amino-acid chain; its full sequence is Small ribosomal subunit protein uS3 (248 aa).

Residues 39-108 (IRKLVDKKLS…TVAVNVAEIP (70 aa)) enclose the KH type-2 domain. Residues 214–248 (ETIARPQRRNDERRPEGGDRANRRRPTARRRAGGE) are disordered. Residues 221-234 (RRNDERRPEGGDRA) are compositionally biased toward basic and acidic residues. Residues 235–248 (NRRRPTARRRAGGE) are compositionally biased toward basic residues.

The protein belongs to the universal ribosomal protein uS3 family. As to quaternary structure, part of the 30S ribosomal subunit. Forms a tight complex with proteins S10 and S14.

Functionally, binds the lower part of the 30S subunit head. Binds mRNA in the 70S ribosome, positioning it for translation. The sequence is that of Small ribosomal subunit protein uS3 from Deinococcus deserti (strain DSM 17065 / CIP 109153 / LMG 22923 / VCD115).